We begin with the raw amino-acid sequence, 223 residues long: Thiamine-phosphate synthase (223 aa).

4-amino-2-methyl-5-(diphosphooxymethyl)pyrimidine-binding positions include 37–41 (QLREK) and N69. Mg(2+) contacts are provided by D70 and D89. S108 is a binding site for 4-amino-2-methyl-5-(diphosphooxymethyl)pyrimidine. 134–136 (TGT) serves as a coordination point for 2-[(2R,5Z)-2-carboxy-4-methylthiazol-5(2H)-ylidene]ethyl phosphate. K137 serves as a coordination point for 4-amino-2-methyl-5-(diphosphooxymethyl)pyrimidine. Residues G167 and 187–188 (VS) contribute to the 2-[(2R,5Z)-2-carboxy-4-methylthiazol-5(2H)-ylidene]ethyl phosphate site. A disordered region spans residues 197 to 223 (AAATRKLQGSVDTASVESQLPSEEPSA). Positions 206–217 (SVDTASVESQLP) are enriched in polar residues.

The protein belongs to the thiamine-phosphate synthase family. The cofactor is Mg(2+).

It carries out the reaction 2-[(2R,5Z)-2-carboxy-4-methylthiazol-5(2H)-ylidene]ethyl phosphate + 4-amino-2-methyl-5-(diphosphooxymethyl)pyrimidine + 2 H(+) = thiamine phosphate + CO2 + diphosphate. It catalyses the reaction 2-(2-carboxy-4-methylthiazol-5-yl)ethyl phosphate + 4-amino-2-methyl-5-(diphosphooxymethyl)pyrimidine + 2 H(+) = thiamine phosphate + CO2 + diphosphate. The catalysed reaction is 4-methyl-5-(2-phosphooxyethyl)-thiazole + 4-amino-2-methyl-5-(diphosphooxymethyl)pyrimidine + H(+) = thiamine phosphate + diphosphate. Its pathway is cofactor biosynthesis; thiamine diphosphate biosynthesis; thiamine phosphate from 4-amino-2-methyl-5-diphosphomethylpyrimidine and 4-methyl-5-(2-phosphoethyl)-thiazole: step 1/1. Functionally, condenses 4-methyl-5-(beta-hydroxyethyl)thiazole monophosphate (THZ-P) and 2-methyl-4-amino-5-hydroxymethyl pyrimidine pyrophosphate (HMP-PP) to form thiamine monophosphate (TMP). This Haloquadratum walsbyi (strain DSM 16790 / HBSQ001) protein is Thiamine-phosphate synthase.